A 306-amino-acid polypeptide reads, in one-letter code: Pseudouridine-5'-phosphate glycosidase (306 aa).

E28 functions as the Proton donor in the catalytic mechanism. K89 and V109 together coordinate substrate. Mn(2+) is bound at residue D139. S141 to D143 serves as a coordination point for substrate. K160 acts as the Nucleophile in catalysis.

The protein belongs to the pseudouridine-5'-phosphate glycosidase family. Homotrimer. The cofactor is Mn(2+).

The catalysed reaction is D-ribose 5-phosphate + uracil = psi-UMP + H2O. Its function is as follows. Catalyzes the reversible cleavage of pseudouridine 5'-phosphate (PsiMP) to ribose 5-phosphate and uracil. Functions biologically in the cleavage direction, as part of a pseudouridine degradation pathway. The polypeptide is Pseudouridine-5'-phosphate glycosidase (Gemmatimonas aurantiaca (strain DSM 14586 / JCM 11422 / NBRC 100505 / T-27)).